Consider the following 597-residue polypeptide: Golgin subfamily A member 8C (597 aa).

Disordered stretches follow at residues 1–80 (MAEE…VPDS) and 96–120 (KQQK…QKAE). A compositionally biased stretch (polar residues) spans 38-50 (TNGSIHETATSGG). The span at 53 to 70 (SPGDSSSTSSSLHAPQSP) shows a compositional bias: low complexity. Coiled-coil stretches lie at residues 81 to 141 (RSVK…NTDL), 199 to 255 (EWKL…SQEV), and 296 to 394 (SEVE…GKRL). The span at 100 to 120 (KQVEHQLEEEKKANNEKQKAE) shows a compositional bias: basic and acidic residues. 3 disordered regions span residues 390-422 (LGKR…SGFM), 457-498 (PITK…GVAA), and 549-576 (PVQG…QEHP). The segment covering 470–483 (PGGGHHQAGPGQGG) has biased composition (gly residues). Residues 553-563 (ETREGSPHDKP) are compositionally biased toward basic and acidic residues.

This sequence belongs to the GOLGA8 family.

This is Golgin subfamily A member 8C (GOLGA8CP) from Homo sapiens (Human).